A 176-amino-acid polypeptide reads, in one-letter code: Large ribosomal subunit protein uL5 (176 aa).

The protein belongs to the universal ribosomal protein uL5 family. Part of the 50S ribosomal subunit; contacts the 5S rRNA and probably tRNA. Forms a bridge to the 30S subunit in the 70S ribosome.

Its function is as follows. This is one of the proteins that bind and probably mediate the attachment of the 5S RNA into the large ribosomal subunit, where it forms part of the central protuberance. In the 70S ribosome it contacts protein S13 of the 30S subunit (bridge B1b), connecting the 2 subunits; this bridge is implicated in subunit movement. May contact the P site tRNA; the 5S rRNA and some of its associated proteins might help stabilize positioning of ribosome-bound tRNAs. This Picrophilus torridus (strain ATCC 700027 / DSM 9790 / JCM 10055 / NBRC 100828 / KAW 2/3) protein is Large ribosomal subunit protein uL5.